A 337-amino-acid polypeptide reads, in one-letter code: Glyceraldehyde-3-phosphate dehydrogenase 1 (337 aa).

Residues 12 to 13 (RI), aspartate 34, and arginine 79 contribute to the NAD(+) site. D-glyceraldehyde 3-phosphate-binding positions include 150 to 152 (SCT), threonine 181, 210 to 211 (TG), and arginine 233. Residue cysteine 151 is the Nucleophile of the active site. Residue asparagine 315 coordinates NAD(+).

The protein belongs to the glyceraldehyde-3-phosphate dehydrogenase family. In terms of assembly, homotetramer.

It is found in the cytoplasm. The catalysed reaction is D-glyceraldehyde 3-phosphate + phosphate + NAD(+) = (2R)-3-phospho-glyceroyl phosphate + NADH + H(+). It participates in carbohydrate degradation; glycolysis; pyruvate from D-glyceraldehyde 3-phosphate: step 1/5. In Mucor circinelloides f. lusitanicus (Mucor racemosus var. lusitanicus), this protein is Glyceraldehyde-3-phosphate dehydrogenase 1 (GPD1).